The primary structure comprises 184 residues: Glutathione-regulated potassium-efflux system ancillary protein KefG (184 aa).

The protein belongs to the NAD(P)H dehydrogenase (quinone) family. KefG subfamily. As to quaternary structure, interacts with KefB.

The protein localises to the cell inner membrane. It catalyses the reaction a quinone + NADH + H(+) = a quinol + NAD(+). It carries out the reaction a quinone + NADPH + H(+) = a quinol + NADP(+). In terms of biological role, regulatory subunit of a potassium efflux system that confers protection against electrophiles. Required for full activity of KefB. The chain is Glutathione-regulated potassium-efflux system ancillary protein KefG from Escherichia coli O1:K1 / APEC.